Here is a 611-residue protein sequence, read N- to C-terminus: Ankyrin repeat protein SKIP35 (611 aa).

ANK repeat units lie at residues 292–322 (LFSNSFDPGWASGMSATVIQGLLGMLVEGGA), 323–353 (DNVNQCFLEASRFGSTELVRVLLQIAQRNSL), 356–384 (DVDLALGFASHYCKIGTMKCLVEEGNAIA), 385–414 (FLGPLMRAAERGCMQVVQWFVKRGCRDMEL), 416–442 (LALTAATSSCQVEVAAYLLPRVPPPVL), and 445–478 (LSIEILKAAGERSGGSLQGVEFLLKSDFLGDSTA).

Interacts with SKP1A/ASK1.

This Arabidopsis thaliana (Mouse-ear cress) protein is Ankyrin repeat protein SKIP35 (SKIP35).